We begin with the raw amino-acid sequence, 340 residues long: Zinc finger protein 367 (340 aa).

The interval 96–140 is disordered; that stretch reads LPTLRGAPPSSASVAAVSGGEDEEEASSPDSGHLKDGIRRGRPRA. A compositionally biased stretch (low complexity) spans 101–114; that stretch reads GAPPSSASVAAVSG. The span at 127–140 shows a compositional bias: basic and acidic residues; the sequence is GHLKDGIRRGRPRA. 2 C2H2-type zinc fingers span residues 157 to 179 and 185 to 209; these read IRCN…KRTH and YLCD…QRLH. Residues 280 to 317 are disordered; sequence KGKLVQKADQEQQDPLEYLQSDEEDDEKSGAQRRLQEQ. Positions 299–332 form a coiled coil; the sequence is QSDEEDDEKSGAQRRLQEQRERLHGALALIELAN. A Phosphoserine modification is found at Ser-300. The segment covering 307–317 has biased composition (basic and acidic residues); that stretch reads KSGAQRRLQEQ.

Belongs to the krueppel C2H2-type zinc-finger protein family.

Its subcellular location is the nucleus. Functionally, transcriptional activator. May be involved in transcriptional activation of erythroid genes. The polypeptide is Zinc finger protein 367 (Znf367) (Rattus norvegicus (Rat)).